The chain runs to 548 residues: Glucose-6-phosphate isomerase (548 aa).

The active-site Proton donor is the Glu355. Residues His386 and Lys514 contribute to the active site.

Belongs to the GPI family.

The protein localises to the cytoplasm. It catalyses the reaction alpha-D-glucose 6-phosphate = beta-D-fructose 6-phosphate. It participates in carbohydrate biosynthesis; gluconeogenesis. It functions in the pathway carbohydrate degradation; glycolysis; D-glyceraldehyde 3-phosphate and glycerone phosphate from D-glucose: step 2/4. Its function is as follows. Catalyzes the reversible isomerization of glucose-6-phosphate to fructose-6-phosphate. This Yersinia pestis (strain Pestoides F) protein is Glucose-6-phosphate isomerase.